Reading from the N-terminus, the 390-residue chain is 1-deoxy-D-xylulose 5-phosphate reductoisomerase (390 aa).

Residues Thr-18, Gly-19, Ser-20, Ile-21, and Asn-130 each contribute to the NADPH site. Lys-131 serves as a coordination point for 1-deoxy-D-xylulose 5-phosphate. Residue Glu-132 coordinates NADPH. Asp-156 is a Mn(2+) binding site. The 1-deoxy-D-xylulose 5-phosphate site is built by Ser-157, Glu-158, Ser-182, and His-205. Glu-158 is a binding site for Mn(2+). Gly-211 serves as a coordination point for NADPH. The 1-deoxy-D-xylulose 5-phosphate site is built by Ser-218, Asn-223, Lys-224, and Glu-227. Position 227 (Glu-227) interacts with Mn(2+).

This sequence belongs to the DXR family. Requires Mg(2+) as cofactor. It depends on Mn(2+) as a cofactor.

It catalyses the reaction 2-C-methyl-D-erythritol 4-phosphate + NADP(+) = 1-deoxy-D-xylulose 5-phosphate + NADPH + H(+). Its pathway is isoprenoid biosynthesis; isopentenyl diphosphate biosynthesis via DXP pathway; isopentenyl diphosphate from 1-deoxy-D-xylulose 5-phosphate: step 1/6. Catalyzes the NADPH-dependent rearrangement and reduction of 1-deoxy-D-xylulose-5-phosphate (DXP) to 2-C-methyl-D-erythritol 4-phosphate (MEP). The protein is 1-deoxy-D-xylulose 5-phosphate reductoisomerase of Bacteroides thetaiotaomicron (strain ATCC 29148 / DSM 2079 / JCM 5827 / CCUG 10774 / NCTC 10582 / VPI-5482 / E50).